The chain runs to 181 residues: Adenine phosphoribosyltransferase (181 aa).

This sequence belongs to the purine/pyrimidine phosphoribosyltransferase family. Homodimer.

It localises to the cytoplasm. It catalyses the reaction AMP + diphosphate = 5-phospho-alpha-D-ribose 1-diphosphate + adenine. It functions in the pathway purine metabolism; AMP biosynthesis via salvage pathway; AMP from adenine: step 1/1. Catalyzes a salvage reaction resulting in the formation of AMP, that is energically less costly than de novo synthesis. The polypeptide is Adenine phosphoribosyltransferase (Vibrio atlanticus (strain LGP32) (Vibrio splendidus (strain Mel32))).